The primary structure comprises 62 residues: Toxin Ct28 (62 aa).

An N-terminal signal peptide occupies residues M1–S22. Disulfide bonds link C29/C51, C35/C56, and C39/C58. N61 is subject to Asparagine amide.

It belongs to the short scorpion toxin superfamily. Potassium channel inhibitor family. Alpha-KTx 02 subfamily. As to expression, expressed by the venom gland.

It is found in the secreted. Blocks voltage-gated potassium channels. This Centruroides tecomanus (Scorpion) protein is Toxin Ct28.